A 374-amino-acid polypeptide reads, in one-letter code: Palmitoyltransferase PFA5 (374 aa).

The Cytoplasmic portion of the chain corresponds to 1 to 13; it reads MALSWNIRIRRRS. Residues 14–34 form a helical membrane-spanning segment; that stretch reads WFRFILPIIVLGLLCYGTWAY. The Lumenal segment spans residues 35 to 55; the sequence is CHKLCYEQVDKRLRQKSVSVG. The helical transmembrane segment at 56-76 threads the bilayer; that stretch reads LICAVCFLDVVVIFIWLQIVI. Over 77 to 173 the chain is Cytoplasmic; sequence LVGPGTQPHV…TVIGRDNYRL (97 aa). The DHHC domain maps to 129–179; it reads IWCSECQSLKMERTHHSSELGHCIPRFDHYCMWIGTVIGRDNYRLFVQFAA. The helical transmembrane segment at 174-194 threads the bilayer; the sequence is FVQFAAYFSTLLLIMWVSICV. Over 195–217 the chain is Lumenal; the sequence is YIRIITQHNHNYSPNLNANIIST. A helical transmembrane segment spans residues 218–238; that stretch reads LVFAILGWLLTASLLASSIFY. Over 239 to 374 the chain is Cytoplasmic; it reads MSQNKTSLEA…ASGDDSDPAY (136 aa).

The protein belongs to the DHHC palmitoyltransferase family. PFA5 subfamily. In terms of processing, autopalmitoylated.

It is found in the membrane. It catalyses the reaction L-cysteinyl-[protein] + hexadecanoyl-CoA = S-hexadecanoyl-L-cysteinyl-[protein] + CoA. The polypeptide is Palmitoyltransferase PFA5 (PFA5) (Saccharomyces cerevisiae (strain ATCC 204508 / S288c) (Baker's yeast)).